Consider the following 485-residue polypeptide: Glutamate--tRNA ligase 1 (485 aa).

Positions 10–20 (PSPTGAIHIGN) match the 'HIGH' region motif. A 'KMSKS' region motif is present at residues 252-256 (KLSKR). Lys255 lines the ATP pocket.

It belongs to the class-I aminoacyl-tRNA synthetase family. Glutamate--tRNA ligase type 1 subfamily. In terms of assembly, monomer.

Its subcellular location is the cytoplasm. It catalyses the reaction tRNA(Glu) + L-glutamate + ATP = L-glutamyl-tRNA(Glu) + AMP + diphosphate. Catalyzes the attachment of glutamate to tRNA(Glu) in a two-step reaction: glutamate is first activated by ATP to form Glu-AMP and then transferred to the acceptor end of tRNA(Glu). This Thermoanaerobacter sp. (strain X514) protein is Glutamate--tRNA ligase 1.